Here is a 236-residue protein sequence, read N- to C-terminus: Virion protein US10 homolog (236 aa).

Residues 1–32 (MDGAYGHVHNGSPMAVDGEESGAGTGTGAGAD) form a disordered region. Residues 21–31 (SGAGTGTGAGA) show a composition bias toward gly residues. A zinc finger lies at 138–150 (CAYWCCLGHAFAC).

Belongs to the herpesviridae US10 family. Phosphorylated.

Its subcellular location is the virion tegument. It is found in the host nucleus matrix. In Equine herpesvirus 1 (strain Ab4p) (EHV-1), this protein is Virion protein US10 homolog.